The following is a 361-amino-acid chain: Replication-associated protein (361 aa).

The CRESS-DNA virus Rep endonuclease domain maps to 8–116 (AINAKNYFLT…DGDVLDHGSF (109 aa)). The short motif at 15–18 (FLTY) is the RCR-1 element. Glu49, His57, and His59 together coordinate a divalent metal cation. The short motif at 57-59 (HLH) is the RCR-2 element. Tyr103 (for DNA cleavage activity) is an active-site residue. Residues 103–106 (YMDK) carry the RCR-3 motif. Asp107 provides a ligand contact to a divalent metal cation. Residues 143-153 (KLQALNILREK) form a binding to RBR1 region. The oligomerization stretch occupies residues 156-176 (KDYILQFHNLNCNLSRIFADD). 220-227 (GDSRTGKT) is a binding site for ATP.

Belongs to the geminiviridae Rep protein family. As to quaternary structure, homooligomer. Interacts with the replication enhancer protein (REn). Interacts with host retinoblastoma-related protein 1 (RBR1), and may thereby induce the transcription of host replicative enzymes even if the cell is not dividing anymore. Interacts with host PCNA. Interacts with host SCE1 protein. Binds to host RAD54 protein to ensure geminiviral replication. The cofactor is Mg(2+). Mn(2+) is required as a cofactor.

The protein resides in the host nucleus. Essential for the replication of viral ssDNA. The closed circular ssDNA genome is first converted to a superhelical dsDNA. Rep binds a specific region at the genome origin of replication. It introduces an endonucleolytic nick within the conserved sequence 5'-TAATATTAC-3' in the intergenic region of the genome present in all geminiviruses, thereby initiating the rolling circle replication (RCR). Following cleavage, binds covalently to the 5'-phosphate of DNA as a tyrosyl ester. The cleavage gives rise to a free 3'-OH that serves as a primer for the cellular DNA polymerase. The polymerase synthesizes the (+) strand DNA by rolling circle mechanism. After one round of replication, a Rep-catalyzed nucleotidyl transfer reaction releases a circular single-stranded virus genome, thereby terminating the replication. Displays origin-specific DNA cleavage, nucleotidyl transferase, ATPase and helicase activities. This is Replication-associated protein from Mungbean yellow mosaic virus (strain Vigna) (MYMV).